Here is a 1514-residue protein sequence, read N- to C-terminus: Helicase SWR1 (1514 aa).

The HSA domain occupies Ile-339 to Arg-411. The segment covering Gln-465–Asn-480 has biased composition (polar residues). 2 disordered regions span residues Gln-465 to Glu-524 and Phe-538 to Val-641. Residues Ser-484–Val-508 are compositionally biased toward acidic residues. Polar residues predominate over residues Ser-513–Glu-524. Positions Ser-547–Ser-563 are enriched in basic and acidic residues. The span at Ser-564–Gln-586 shows a compositional bias: low complexity. The segment covering Glu-588 to Thr-597 has biased composition (basic and acidic residues). Over residues Ser-612–Asp-623 the composition is skewed to acidic residues. The Helicase ATP-binding domain maps to Ala-708–Gln-873. Residue Asp-721–Thr-728 coordinates ATP. A DEAH box motif is present at residues Asp-824–His-827. Residues Lys-1247–Thr-1400 enclose the Helicase C-terminal domain. Positions Asn-1469–Glu-1490 are disordered. The segment covering Ser-1475–Glu-1490 has biased composition (basic and acidic residues).

It belongs to the SNF2/RAD54 helicase family. SWR1 subfamily. In terms of assembly, component of the SWR1 chromatin-remodeling complex composed of at least ACT1, ARP4, RVB1, RVB2, ARP6, YAF9, VPS71, VPS72, SWC3, SWC4, SWC5, SWC7 and SWR1, and perhaps BDF1.

The protein localises to the nucleus. It catalyses the reaction ATP + H2O = ADP + phosphate + H(+). Functionally, catalytic component of the SWR1 complex which mediates the ATP-dependent exchange of histone H2A for the H2A variant HZT1 leading to transcriptional regulation of selected genes by chromatin remodeling. This Saccharomyces cerevisiae (strain ATCC 204508 / S288c) (Baker's yeast) protein is Helicase SWR1 (SWR1).